The chain runs to 591 residues: Proteasome-associated ATPase (591 aa).

Residues 10-77 (VAAAEELHAL…LREEVDRLGQ (68 aa)) adopt a coiled-coil conformation. 278–283 (GCGKTL) provides a ligand contact to ATP. Positions 590 to 591 (YL) are docks into pockets in the proteasome alpha-ring.

Belongs to the AAA ATPase family. In terms of assembly, homohexamer. Assembles into a hexameric ring structure that likely caps the 20S proteasome core. Can form a complex composed of two stacked hexameric rings in vitro. Probably interacts with the prokaryotic ubiquitin-like protein Pup through a hydrophobic interface; the expected interacting region of ARC lies in its N-terminal coiled-coil domain. There is likely one Pup binding site per ARC hexamer ring. Upon ATP-binding, the C-terminus of ARC probably interacts with the alpha-rings of the proteasome core, possibly by binding to the intersubunit pockets.

It functions in the pathway protein degradation; proteasomal Pup-dependent pathway. With respect to regulation, ATPase activity is inhibited by N-ethylmaleimide (NEM) but not by sodium azide. Its function is as follows. ATPase which is responsible for recognizing, binding, unfolding and translocation of pupylated proteins into the bacterial 20S proteasome core particle. May be essential for opening the gate of the 20S proteasome via an interaction with its C-terminus, thereby allowing substrate entry and access to the site of proteolysis. Thus, the C-termini of the proteasomal ATPase may function like a 'key in a lock' to induce gate opening and therefore regulate proteolysis. This is Proteasome-associated ATPase from Rhodococcus erythropolis (Arthrobacter picolinophilus).